The following is a 61-amino-acid chain: Small ribosomal subunit protein uS14 (61 aa).

Zn(2+)-binding residues include C24, C27, C40, and C43.

The protein belongs to the universal ribosomal protein uS14 family. Zinc-binding uS14 subfamily. In terms of assembly, part of the 30S ribosomal subunit. Contacts proteins S3 and S10. It depends on Zn(2+) as a cofactor.

Binds 16S rRNA, required for the assembly of 30S particles and may also be responsible for determining the conformation of the 16S rRNA at the A site. The sequence is that of Small ribosomal subunit protein uS14 from Moorella thermoacetica (strain ATCC 39073 / JCM 9320).